Consider the following 629-residue polypeptide: Phosphomethylpyrimidine synthase (629 aa).

Residues 1–13 (MTTKSKNAINLSD) show a composition bias toward polar residues. The disordered stretch occupies residues 1–22 (MTTKSKNAINLSDSAKVDEQSV). Substrate contacts are provided by residues N233, M262, Y291, H327, 347–349 (SRG), 388–391 (DGLR), and E427. A Zn(2+)-binding site is contributed by H431. Y454 lines the substrate pocket. Zn(2+) is bound at residue H495. The [4Fe-4S] cluster site is built by C575, C578, and C583.

This sequence belongs to the ThiC family. As to quaternary structure, homodimer. [4Fe-4S] cluster is required as a cofactor.

The enzyme catalyses 5-amino-1-(5-phospho-beta-D-ribosyl)imidazole + S-adenosyl-L-methionine = 4-amino-2-methyl-5-(phosphooxymethyl)pyrimidine + CO + 5'-deoxyadenosine + formate + L-methionine + 3 H(+). The protein operates within cofactor biosynthesis; thiamine diphosphate biosynthesis. Functionally, catalyzes the synthesis of the hydroxymethylpyrimidine phosphate (HMP-P) moiety of thiamine from aminoimidazole ribotide (AIR) in a radical S-adenosyl-L-methionine (SAM)-dependent reaction. This is Phosphomethylpyrimidine synthase from Pseudomonas fluorescens (strain Pf0-1).